The chain runs to 323 residues: Oligodendrocyte transcription factor 2 (323 aa).

The segment covering 1–13 (MDSDASLVSSRPS) has biased composition (polar residues). The tract at residues 1–107 (MDSDASLVSS…KKQMTEPELQ (107 aa)) is disordered. Residues 77-93 (SSSSSTSSSTSSAATSS) show a composition bias toward low complexity. The bHLH domain maps to 108–162 (QLRLKINSRERKRMHDLNIAMDGLREVMPYAHGPSVRKLSKIATLLLARNYILML).

As to quaternary structure, interacts with NKX2-2. Interacts with ZNF488. Expressed specifically in the brain.

Its subcellular location is the nucleus. It is found in the cytoplasm. Its function is as follows. Required for oligodendrocyte and motor neuron specification in the spinal cord, as well as for the development of somatic motor neurons in the hindbrain. Functions together with ZNF488 to promote oligodendrocyte differentiation. Cooperates with OLIG1 to establish the pMN domain of the embryonic neural tube. Antagonist of V2 interneuron and of NKX2-2-induced V3 interneuron development. This chain is Oligodendrocyte transcription factor 2 (Olig2), found in Mus musculus (Mouse).